The sequence spans 185 residues: C-type lectin domain family 5 member A (185 aa).

Residues Met1 to His4 lie on the Cytoplasmic side of the membrane. The helical; Signal-anchor for type II membrane protein transmembrane segment at Met5–Phe27 threads the bilayer. The Extracellular segment spans residues Pro28–Gln185. N-linked (GlcNAc...) asparagine glycosylation is found at Asn35 and Asn55. Cysteines 68 and 79 form a disulfide. A C-type lectin domain is found at His75–Glu181. Asn90, Asn117, Asn141, and Asn146 each carry an N-linked (GlcNAc...) asparagine glycan. 2 cysteine pairs are disulfide-bonded: Cys96–Cys180 and Cys158–Cys172.

As to quaternary structure, monomer. Homodimer. The majority of CLEC5A is expressed as a monomeric form on macrophages. Interacts with TYROBP/DAP12. The interaction with TYROBP is required for CLEC5 cell surface expression. Interacts with HCST/DAP10. Forms a CLEC5A/TYROBP/HCST trimolecular complex depending almost solely on TYROBP. Post-translationally, N-glycosylated. Contains sialic acid residues. As to expression, constitutively expressed in monocytes and macrophages.

The protein localises to the cell membrane. Functionally, functions as a positive regulator of osteoclastogenesis. Cell surface receptor that signals via TYROBP. Regulates inflammatory responses. The polypeptide is C-type lectin domain family 5 member A (CLEC5A) (Sus scrofa (Pig)).